The following is a 102-amino-acid chain: Small ribosomal subunit protein uS10 (102 aa).

This sequence belongs to the universal ribosomal protein uS10 family. Part of the 30S ribosomal subunit.

Functionally, involved in the binding of tRNA to the ribosomes. In Finegoldia magna (strain ATCC 29328 / DSM 20472 / WAL 2508) (Peptostreptococcus magnus), this protein is Small ribosomal subunit protein uS10.